A 485-amino-acid polypeptide reads, in one-letter code: Probable outer membrane usher protein LpfC' (485 aa).

It belongs to the fimbrial export usher family.

The protein localises to the cell outer membrane. Part of the lpfABCC'DE fimbrial operon. LP fimbriae may participate in the interaction with eukaryotic cells by assisting in microcolony formation. Could be involved in the export and assembly of the fimbrial subunits across the outer membrane. The protein is Probable outer membrane usher protein LpfC' (lpfC') of Escherichia coli O157:H7.